The sequence spans 698 residues: UvrABC system protein B (698 aa).

Residues 35-210 (ARLQAGEKDI…TFRVRGDTVE (176 aa)) enclose the Helicase ATP-binding domain. Residue 48–55 (GATGTGKS) coordinates ATP. The Beta-hairpin motif lies at 101–124 (YYDYYQPEAYVPSSDTYIEKDSSI). One can recognise a Helicase C-terminal domain in the interval 438–604 (QIDDLLAEIN…PLRKRIGDIT (167 aa)). Residues 654 to 689 (AELIQELTDQMHVAAGELQFEVAARLRDEISDLKKE) enclose the UVR domain.

It belongs to the UvrB family. In terms of assembly, forms a heterotetramer with UvrA during the search for lesions. Interacts with UvrC in an incision complex.

The protein localises to the cytoplasm. Functionally, the UvrABC repair system catalyzes the recognition and processing of DNA lesions. A damage recognition complex composed of 2 UvrA and 2 UvrB subunits scans DNA for abnormalities. Upon binding of the UvrA(2)B(2) complex to a putative damaged site, the DNA wraps around one UvrB monomer. DNA wrap is dependent on ATP binding by UvrB and probably causes local melting of the DNA helix, facilitating insertion of UvrB beta-hairpin between the DNA strands. Then UvrB probes one DNA strand for the presence of a lesion. If a lesion is found the UvrA subunits dissociate and the UvrB-DNA preincision complex is formed. This complex is subsequently bound by UvrC and the second UvrB is released. If no lesion is found, the DNA wraps around the other UvrB subunit that will check the other stand for damage. The sequence is that of UvrABC system protein B from Beutenbergia cavernae (strain ATCC BAA-8 / DSM 12333 / CCUG 43141 / JCM 11478 / NBRC 16432 / NCIMB 13614 / HKI 0122).